We begin with the raw amino-acid sequence, 427 residues long: MSRNAELFERASRSIPGGVNSPVRAFRSVGGTPRFIKRALGPHIWDADGKQYIDYLGSWGPAILGHAHPEVVRAVQDAATGGLSFGAPTEAEVELAELLIQRLPSMEQVRLVSSGTEATMTAIRLARGATGRNKIIKFEGCYHGHSDSLLVKAGSGLLTLGNPSSAGVPPEFVAHTITLDYNNLPAVQTAFAEHGRDIACVIVEPVAGNMNLIKPAAGFLEGLRELCTRHGSVLIFDEVMTGFRVGPQGVQGLTGITPDLTTLAKVIGGGMPVGAFGGRADLMRHIAPLGSVYQAGTLSGNPVAVAAGLATLRLIGQPGFYEDLSARTQRLALGLTERAHAAGVTFSADAIGGMFGLYFRDKVPTSFAEVQTSNTEAFKRFFHAMLDRGVHFAPSAFEAGFVSAAHDDATLQATLDHAEAAFALLKA.

N6-(pyridoxal phosphate)lysine is present on Lys265.

The protein belongs to the class-III pyridoxal-phosphate-dependent aminotransferase family. HemL subfamily. As to quaternary structure, homodimer. The cofactor is pyridoxal 5'-phosphate.

The protein localises to the cytoplasm. The enzyme catalyses (S)-4-amino-5-oxopentanoate = 5-aminolevulinate. It participates in porphyrin-containing compound metabolism; protoporphyrin-IX biosynthesis; 5-aminolevulinate from L-glutamyl-tRNA(Glu): step 2/2. In Bordetella avium (strain 197N), this protein is Glutamate-1-semialdehyde 2,1-aminomutase.